A 126-amino-acid polypeptide reads, in one-letter code: Glycine cleavage system H protein (126 aa).

The Lipoyl-binding domain occupies 22–104; sequence VATIGITEYA…YEKAWMVKVE (83 aa). The residue at position 63 (Lys-63) is an N6-lipoyllysine.

This sequence belongs to the GcvH family. As to quaternary structure, the glycine cleavage system is composed of four proteins: P, T, L and H. The cofactor is (R)-lipoate.

In terms of biological role, the glycine cleavage system catalyzes the degradation of glycine. The H protein shuttles the methylamine group of glycine from the P protein to the T protein. Is also involved in protein lipoylation via its role as an octanoyl/lipoyl carrier protein intermediate. This is Glycine cleavage system H protein from Staphylococcus aureus (strain MSSA476).